Reading from the N-terminus, the 290-residue chain is Ribosomal RNA small subunit methyltransferase A (290 aa).

S-adenosyl-L-methionine contacts are provided by Asn-27, Leu-29, Gly-54, Glu-75, Asp-100, and Asn-125.

It belongs to the class I-like SAM-binding methyltransferase superfamily. rRNA adenine N(6)-methyltransferase family. RsmA subfamily.

It is found in the cytoplasm. The enzyme catalyses adenosine(1518)/adenosine(1519) in 16S rRNA + 4 S-adenosyl-L-methionine = N(6)-dimethyladenosine(1518)/N(6)-dimethyladenosine(1519) in 16S rRNA + 4 S-adenosyl-L-homocysteine + 4 H(+). Its function is as follows. Specifically dimethylates two adjacent adenosines (A1518 and A1519) in the loop of a conserved hairpin near the 3'-end of 16S rRNA in the 30S particle. May play a critical role in biogenesis of 30S subunits. This chain is Ribosomal RNA small subunit methyltransferase A, found in Streptococcus pyogenes serotype M3 (strain ATCC BAA-595 / MGAS315).